The sequence spans 500 residues: Apolipoprotein N-acyltransferase (500 aa).

A run of 6 helical transmembrane segments spans residues 5–25 (VAPF…WIFV), 38–58 (LLLL…FWIT), 74–94 (LAIT…FGAI), 111–131 (ILIG…GPLW), 145–165 (AILH…IVSV), and 185–205 (LAIA…LYTA). In terms of domain architecture, CN hydrolase spans 215-462 (LKVGIVQGNI…ETIYRRQTQN (248 aa)). Catalysis depends on E261, which acts as the Proton acceptor. K318 is a catalytic residue. Catalysis depends on C369, which acts as the Nucleophile. Residues 469–489 (DWFTPLLVGLSFLGWSLNIFW) traverse the membrane as a helical segment.

It belongs to the CN hydrolase family. Apolipoprotein N-acyltransferase subfamily.

The protein resides in the cell inner membrane. The catalysed reaction is N-terminal S-1,2-diacyl-sn-glyceryl-L-cysteinyl-[lipoprotein] + a glycerophospholipid = N-acyl-S-1,2-diacyl-sn-glyceryl-L-cysteinyl-[lipoprotein] + a 2-acyl-sn-glycero-3-phospholipid + H(+). Its pathway is protein modification; lipoprotein biosynthesis (N-acyl transfer). Its function is as follows. Catalyzes the phospholipid dependent N-acylation of the N-terminal cysteine of apolipoprotein, the last step in lipoprotein maturation. This chain is Apolipoprotein N-acyltransferase, found in Nostoc sp. (strain PCC 7120 / SAG 25.82 / UTEX 2576).